An 89-amino-acid chain; its full sequence is Small ribosomal subunit protein uS15 (89 aa).

It belongs to the universal ribosomal protein uS15 family. As to quaternary structure, part of the 30S ribosomal subunit. Forms a bridge to the 50S subunit in the 70S ribosome, contacting the 23S rRNA.

Functionally, one of the primary rRNA binding proteins, it binds directly to 16S rRNA where it helps nucleate assembly of the platform of the 30S subunit by binding and bridging several RNA helices of the 16S rRNA. Its function is as follows. Forms an intersubunit bridge (bridge B4) with the 23S rRNA of the 50S subunit in the ribosome. The protein is Small ribosomal subunit protein uS15 of Herminiimonas arsenicoxydans.